The chain runs to 369 residues: NAD(P)H-quinone oxidoreductase subunit 1, chloroplastic (369 aa).

The next 5 helical transmembrane spans lie at 25 to 45 (FGFI…TIGI), 104 to 124 (VMVV…HGII), 130 to 150 (IGVF…LTAG), 270 to 290 (LSAT…LFLP), and 306 to 326 (VISI…FLFI).

The protein belongs to the complex I subunit 1 family. NDH is composed of at least 16 different subunits, 5 of which are encoded in the nucleus.

The protein resides in the plastid. It localises to the chloroplast thylakoid membrane. The catalysed reaction is a plastoquinone + NADH + (n+1) H(+)(in) = a plastoquinol + NAD(+) + n H(+)(out). It catalyses the reaction a plastoquinone + NADPH + (n+1) H(+)(in) = a plastoquinol + NADP(+) + n H(+)(out). Its function is as follows. NDH shuttles electrons from NAD(P)H:plastoquinone, via FMN and iron-sulfur (Fe-S) centers, to quinones in the photosynthetic chain and possibly in a chloroplast respiratory chain. The immediate electron acceptor for the enzyme in this species is believed to be plastoquinone. Couples the redox reaction to proton translocation, and thus conserves the redox energy in a proton gradient. The chain is NAD(P)H-quinone oxidoreductase subunit 1, chloroplastic from Huperzia lucidula (Shining clubmoss).